The primary structure comprises 414 residues: Histidine--tRNA ligase (414 aa).

The protein belongs to the class-II aminoacyl-tRNA synthetase family. In terms of assembly, homodimer.

It localises to the cytoplasm. The catalysed reaction is tRNA(His) + L-histidine + ATP = L-histidyl-tRNA(His) + AMP + diphosphate + H(+). In Rickettsia conorii (strain ATCC VR-613 / Malish 7), this protein is Histidine--tRNA ligase.